Consider the following 76-residue polypeptide: Defensin-like protein 155 (76 aa).

The signal sequence occupies residues 1–27 (MAKISCSYLLILMLALSVFSVVEKAKG). Intrachain disulfides connect Cys31–Cys76, Cys40–Cys59, Cys45–Cys70, and Cys49–Cys72.

It belongs to the DEFL family.

It is found in the secreted. The chain is Defensin-like protein 155 (LCR36) from Arabidopsis thaliana (Mouse-ear cress).